We begin with the raw amino-acid sequence, 423 residues long: Glucose-1-phosphate adenylyltransferase (423 aa).

Residues Tyr-107, Gly-172, 187–188 (EK), and Ser-205 each bind alpha-D-glucose 1-phosphate.

This sequence belongs to the bacterial/plant glucose-1-phosphate adenylyltransferase family. As to quaternary structure, homotetramer.

The enzyme catalyses alpha-D-glucose 1-phosphate + ATP + H(+) = ADP-alpha-D-glucose + diphosphate. Its pathway is glycan biosynthesis; glycogen biosynthesis. Functionally, involved in the biosynthesis of ADP-glucose, a building block required for the elongation reactions to produce glycogen. Catalyzes the reaction between ATP and alpha-D-glucose 1-phosphate (G1P) to produce pyrophosphate and ADP-Glc. This Cereibacter sphaeroides (strain ATCC 17029 / ATH 2.4.9) (Rhodobacter sphaeroides) protein is Glucose-1-phosphate adenylyltransferase.